The chain runs to 213 residues: FMN-dependent NADH:quinone oxidoreductase (213 aa).

FMN is bound at residue S10.

Belongs to the azoreductase type 1 family. In terms of assembly, homodimer. FMN serves as cofactor.

It carries out the reaction 2 a quinone + NADH + H(+) = 2 a 1,4-benzosemiquinone + NAD(+). The enzyme catalyses N,N-dimethyl-1,4-phenylenediamine + anthranilate + 2 NAD(+) = 2-(4-dimethylaminophenyl)diazenylbenzoate + 2 NADH + 2 H(+). Its function is as follows. Quinone reductase that provides resistance to thiol-specific stress caused by electrophilic quinones. In terms of biological role, also exhibits azoreductase activity. Catalyzes the reductive cleavage of the azo bond in aromatic azo compounds to the corresponding amines. This Opitutus terrae (strain DSM 11246 / JCM 15787 / PB90-1) protein is FMN-dependent NADH:quinone oxidoreductase.